A 455-amino-acid chain; its full sequence is Virion host shutoff protein (455 aa).

It belongs to the herpesviridae VHS protein family.

The protein resides in the virion. Minor structural protein that acts as an endoribonuclease during lytic infection. Degrades host mRNAs in the cytoplasm by cutting them at preferred sites, including some in regions of translation initiation. The protein is Virion host shutoff protein (17) of Homo sapiens (Human).